The primary structure comprises 85 residues: Large ribosomal subunit protein bL31B (85 aa).

Belongs to the bacterial ribosomal protein bL31 family. Type B subfamily. Part of the 50S ribosomal subunit.

This is Large ribosomal subunit protein bL31B from Vibrio cholerae serotype O1 (strain ATCC 39541 / Classical Ogawa 395 / O395).